A 170-amino-acid chain; its full sequence is Tubulin polymerization-promoting protein family member 2 (170 aa).

Low complexity predominate over residues threonine 105–valine 117. The interval threonine 105–glutamine 170 is disordered. The segment covering threonine 129–threonine 149 has biased composition (basic and acidic residues).

This sequence belongs to the TPPP family. Only expressed in male reproductive organs, including testis. Expressed in elongating spermatids at stages IV-VIII of the seminiferous epithelial cycle in testis and in mature sperm in the epididymis.

It localises to the cytoplasm. Its subcellular location is the cytosol. It is found in the cell projection. The protein localises to the cilium. The protein resides in the flagellum. Functionally, probable regulator of microtubule dynamics required for sperm motility. In contrast to other members of the family, has no microtubule bundling activity. In Mus musculus (Mouse), this protein is Tubulin polymerization-promoting protein family member 2.